The primary structure comprises 78 residues: Acyl carrier protein (78 aa).

Residues 2–77 enclose the Carrier domain; it reads STIEERVKKI…AAIDYVKAHQ (76 aa). Serine 37 is subject to O-(pantetheine 4'-phosphoryl)serine.

Belongs to the acyl carrier protein (ACP) family. In terms of processing, 4'-phosphopantetheine is transferred from CoA to a specific serine of apo-ACP by AcpS. This modification is essential for activity because fatty acids are bound in thioester linkage to the sulfhydryl of the prosthetic group.

It localises to the cytoplasm. It participates in lipid metabolism; fatty acid biosynthesis. Functionally, carrier of the growing fatty acid chain in fatty acid biosynthesis. The polypeptide is Acyl carrier protein (Pseudomonas putida (strain ATCC 47054 / DSM 6125 / CFBP 8728 / NCIMB 11950 / KT2440)).